The following is a 231-amino-acid chain: NADH-ubiquinone oxidoreductase chain 4 (231 aa).

6 helical membrane passes run 1–21 (PIAG…YGII), 34–54 (MFLP…LTCL), 63–85 (IAYS…TPWG), 89–111 (AMAL…NTTY), 128–148 (ILPM…AVPP), and 156–176 (LLIM…LGLS).

Belongs to the complex I subunit 4 family.

It localises to the mitochondrion membrane. The catalysed reaction is a ubiquinone + NADH + 5 H(+)(in) = a ubiquinol + NAD(+) + 4 H(+)(out). Functionally, core subunit of the mitochondrial membrane respiratory chain NADH dehydrogenase (Complex I) that is believed to belong to the minimal assembly required for catalysis. Complex I functions in the transfer of electrons from NADH to the respiratory chain. The immediate electron acceptor for the enzyme is believed to be ubiquinone. In Agkistrodon contortrix contortrix (Southern copperhead), this protein is NADH-ubiquinone oxidoreductase chain 4 (MT-ND4).